A 185-amino-acid chain; its full sequence is Threonylcarbamoyl-AMP synthase (185 aa).

The YrdC-like domain occupies 4–185 (SWRVQQAARE…LATGKVVRPS (182 aa)).

The protein belongs to the SUA5 family. TsaC subfamily.

The protein localises to the cytoplasm. The catalysed reaction is L-threonine + hydrogencarbonate + ATP = L-threonylcarbamoyladenylate + diphosphate + H2O. Functionally, required for the formation of a threonylcarbamoyl group on adenosine at position 37 (t(6)A37) in tRNAs that read codons beginning with adenine. Catalyzes the conversion of L-threonine, HCO(3)(-)/CO(2) and ATP to give threonylcarbamoyl-AMP (TC-AMP) as the acyladenylate intermediate, with the release of diphosphate. The polypeptide is Threonylcarbamoyl-AMP synthase (Pseudomonas fluorescens (strain ATCC BAA-477 / NRRL B-23932 / Pf-5)).